The chain runs to 160 residues: RNA pyrophosphohydrolase (160 aa).

A Nudix hydrolase domain is found at 10-154; the sequence is PYRKCVGVVL…KRDVYEQVFD (145 aa). The Nudix box signature appears at 44–65; it reads GGIEDGEDARTAALRELVEETG.

It belongs to the Nudix hydrolase family. RppH subfamily. Requires a divalent metal cation as cofactor.

In terms of biological role, accelerates the degradation of transcripts by removing pyrophosphate from the 5'-end of triphosphorylated RNA, leading to a more labile monophosphorylated state that can stimulate subsequent ribonuclease cleavage. The sequence is that of RNA pyrophosphohydrolase from Dinoroseobacter shibae (strain DSM 16493 / NCIMB 14021 / DFL 12).